The following is a 249-amino-acid chain: 5'-nucleotidase SurE (249 aa).

Residues Asp8, Asp9, Ser39, and Asn91 each coordinate a divalent metal cation.

This sequence belongs to the SurE nucleotidase family. The cofactor is a divalent metal cation.

The protein resides in the cytoplasm. The catalysed reaction is a ribonucleoside 5'-phosphate + H2O = a ribonucleoside + phosphate. Nucleotidase that shows phosphatase activity on nucleoside 5'-monophosphates. This is 5'-nucleotidase SurE from Pseudomonas entomophila (strain L48).